A 308-amino-acid polypeptide reads, in one-letter code: 3'(2'),5'-bisphosphate nucleotidase 1 (308 aa).

Ala-2 is subject to N-acetylalanine. Catalysis depends on Asp-51, which acts as the Proton acceptor. Residues Glu-74, Asp-117, Leu-119, and Asp-120 each contribute to the Mg(2+) site. The active-site Proton acceptor is the Thr-122. Thr-122 is subject to Phosphothreonine. The AMP site is built by Thr-195, His-198, Gly-220, and Lys-224. At Ser-240 the chain carries Phosphoserine. At Lys-244 the chain carries N6-succinyllysine. Residue Asp-247 coordinates Mg(2+).

Belongs to the inositol monophosphatase superfamily. Requires Mg(2+) as cofactor. As to expression, widely expressed. Highly expressed in kidney.

It catalyses the reaction adenosine 3',5'-bisphosphate + H2O = AMP + phosphate. It carries out the reaction adenosine 2',5'-bisphosphate + H2O = AMP + phosphate. The catalysed reaction is 3'-phosphoadenylyl sulfate + H2O = adenosine 5'-phosphosulfate + phosphate. The enzyme catalyses 1D-myo-inositol 1,4-bisphosphate + H2O = 1D-myo-inositol 4-phosphate + phosphate. It catalyses the reaction 1D-myo-inositol 1,3,4-trisphosphate + H2O = 1D-myo-inositol 3,4-bisphosphate + phosphate. Uncompetitively inhibited by Li(+) (IC(50)=157 uM). PAP hydrolysis is competitively inhibited by PAPS (IC(50)=0.7 uM) and by inositol 1,4-bisphosphate (IC(50)=15 uM). In terms of biological role, phosphatase that converts 3'(2')-phosphoadenosine 5'-phosphate (PAP) to AMP and adenosine 3'-phosphate 5'-phosphosulfate (PAPS) to adenosine 5'-phosphosulfate (APS). Is also able to hydrolyze inositol 1,4-bisphosphate (Ins(1,4)P2) and inositol 1,3,4-trisphosphate (Ins(1,3,4)P3), and is not active on Ins(1)P, Ins(4)P, Ins(3,4)P2, Ins(1,4,5)P3, Ins(1,3,4,5)P4, Ins(1,3,4,5,6)P5 or InsP6. Probably prevents the toxic accumulation of PAP, a compound which inhibits a variety of proteins, including PAPS-utilizing enzymes such as sulfotransferases, and RNA processing enzymes. Could also play a role in inositol recycling and phosphoinositide metabolism. This Mus musculus (Mouse) protein is 3'(2'),5'-bisphosphate nucleotidase 1 (Bpnt1).